Reading from the N-terminus, the 114-residue chain is Nucleoid-associated protein Clos_2855 (114 aa).

The protein belongs to the YbaB/EbfC family. In terms of assembly, homodimer.

It localises to the cytoplasm. Its subcellular location is the nucleoid. Its function is as follows. Binds to DNA and alters its conformation. May be involved in regulation of gene expression, nucleoid organization and DNA protection. The protein is Nucleoid-associated protein Clos_2855 of Alkaliphilus oremlandii (strain OhILAs) (Clostridium oremlandii (strain OhILAs)).